Reading from the N-terminus, the 141-residue chain is Hemoglobin subunit alpha-D (141 aa).

A Globin domain is found at 1 to 141 (VLTHEDCELL…VGDMLAEKYR (141 aa)). Residues histidine 58 and histidine 87 each coordinate heme b.

Belongs to the globin family. There are three forms of hemoglobin in Sphenodon: A, A' and D. Hb A is a tetramer of two alpha-A and two beta-1, Hb A' is a tetramer of two alpha-a and two beta-2, Hb D is a tetramer of two alpha-D and two beta-2. In terms of tissue distribution, red blood cells.

Involved in oxygen transport from the lung to the various peripheral tissues. The sequence is that of Hemoglobin subunit alpha-D (HBAD) from Sphenodon punctatus (Tuatara).